Consider the following 255-residue polypeptide: 3-oxoacyl-[acyl-carrier-protein] reductase MabA (255 aa).

NADP(+) contacts are provided by residues 32-35 (NRGI), Arg55, 69-70 (DV), Gly98, Tyr161, Lys165, Ile194, and Arg205. Tyr161 functions as the Proton acceptor in the catalytic mechanism.

The protein belongs to the short-chain dehydrogenases/reductases (SDR) family. Homotetramer.

Its subcellular location is the secreted. It localises to the cell wall. The enzyme catalyses a (3R)-hydroxyacyl-[ACP] + NADP(+) = a 3-oxoacyl-[ACP] + NADPH + H(+). The catalysed reaction is a (3R)-3-hydroxyacyl-CoA + NADP(+) = a 3-oxoacyl-CoA + NADPH + H(+). It catalyses the reaction (3R)-3-hydroxybutanoyl-CoA + NADP(+) = acetoacetyl-CoA + NADPH + H(+). It carries out the reaction (3R)-hydroxyoctanoyl-CoA + NADP(+) = 3-oxooctanoyl-CoA + NADPH + H(+). It participates in lipid metabolism; mycolic acid biosynthesis. In terms of biological role, part of the mycobacterial fatty acid elongation system FAS-II, which is involved in mycolic acid biosynthesis. Catalyzes the NADPH-dependent reduction of beta-ketoacyl derivatives, the second step of the FAS-II elongation cycle. Has a preference for longer substrates. Can use CoA derivatives as substrates in vitro. In Mycolicibacterium smegmatis (strain ATCC 700084 / mc(2)155) (Mycobacterium smegmatis), this protein is 3-oxoacyl-[acyl-carrier-protein] reductase MabA.